The following is an 80-amino-acid chain: Omega-conotoxin-like 2/7 (80 aa).

A signal peptide spans 1–22 (MKLTCMMIVAVMFLTASIFITA). The propeptide occupies 23–51 (DNSRNGIENLPRMRRHEMKKPKASKLNKR). 3 disulfide bridges follow: Cys-53–Cys-71, Cys-60–Cys-75, and Cys-70–Cys-79.

The protein belongs to the conotoxin O1 superfamily. Expressed by the venom duct.

The protein resides in the secreted. Omega-conotoxins act at presynaptic membranes, they bind and block voltage-gated calcium channels (Cav). The polypeptide is Omega-conotoxin-like 2/7 (Conus imperialis (Imperial cone)).